A 235-amino-acid chain; its full sequence is Putative homeobox-leucine zipper protein ATHB-51 (235 aa).

Positions glutamate 74–glutamine 133 form a DNA-binding region, homeobox. Positions leucine 134 to leucine 162 are leucine-zipper.

It belongs to the HD-ZIP homeobox family. Class I subfamily. Widely expressed.

Its subcellular location is the nucleus. Its function is as follows. Putative transcription factor. This chain is Putative homeobox-leucine zipper protein ATHB-51 (ATHB-51), found in Arabidopsis thaliana (Mouse-ear cress).